Consider the following 58-residue polypeptide: Large ribosomal subunit protein uL30 (58 aa).

The protein belongs to the universal ribosomal protein uL30 family. As to quaternary structure, part of the 50S ribosomal subunit.

The protein is Large ribosomal subunit protein uL30 of Pseudomonas fluorescens (strain ATCC BAA-477 / NRRL B-23932 / Pf-5).